Here is a 460-residue protein sequence, read N- to C-terminus: Gastric inhibitory polypeptide receptor (460 aa).

The N-terminal stretch at 1 to 18 (MPLRLLLLLLWLWGLQWA) is a signal peptide. At 19 to 134 (ETDSEGQTTT…DQTLILERLQ (116 aa)) the chain is on the extracellular side. 3 disulfides stabilise this stretch: cysteine 42-cysteine 66, cysteine 57-cysteine 99, and cysteine 80-cysteine 114. N-linked (GlcNAc...) asparagine glycosylation is found at asparagine 58, asparagine 68, and asparagine 73. A helical membrane pass occupies residues 135–155 (IMYTVGYSLSLTTLLLALLIL). The Cytoplasmic portion of the chain corresponds to 156-166 (SLFRRLHCTRN). A helical transmembrane segment spans residues 167 to 185 (YIHMNLFTSFMLRAAAILT). The Extracellular segment spans residues 186-222 (RDQLLPPLGPYTGDQAPTPWNQALAACRTAQIMTQYC). A helical transmembrane segment spans residues 223–243 (VGANYTWLLVEGVYLHHLLVI). Residues 244-255 (VGRSEKGHFRCY) are Cytoplasmic-facing. Residues 256–276 (LLLGWGAPALFVIPWVIVRYL) traverse the membrane as a helical segment. Topologically, residues 277-297 (RENTQCWERNEVKAIWWIIRT) are extracellular. The chain crosses the membrane as a helical span at residues 298–318 (PILITILINFLIFIRILGILV). Topologically, residues 319–337 (SKLRTRQMRCPDYRLRLAR) are cytoplasmic. The helical transmembrane segment at 338–358 (STLTLVPLLGVHEVVFAPVTE) threads the bilayer. The Extracellular segment spans residues 359 to 370 (EQVEGSLRFAKL). The helical transmembrane segment at 371-391 (AFEIFLSSFQGFLVSVLYCFI) threads the bilayer. Topologically, residues 392 to 460 (NKEVQSEIRQ…PGDEVLESYC (69 aa)) are cytoplasmic.

It belongs to the G-protein coupled receptor 2 family. May form homodimers and heterodimers with GLP1R. N-glycosylation is required for cell surface expression and lengthens receptor half-life by preventing degradation in the ER.

It is found in the cell membrane. Its function is as follows. This is a receptor for GIP. The activity of this receptor is mediated by G proteins which activate adenylyl cyclase. The sequence is that of Gastric inhibitory polypeptide receptor (Gipr) from Mus musculus (Mouse).